A 508-amino-acid polypeptide reads, in one-letter code: Cobalamin biosynthesis protein CobIJ (508 aa).

The segment at 1 to 243 is precorrin-2 C20-methyltransferase; that stretch reads MSARGTLWGV…AMLPGGRRRA (243 aa). A precorrin-3 methylase region spans residues 244–508; the sequence is LLTGTVAVVG…TATKSSRHSD (265 aa). The disordered stretch occupies residues 489–508; that stretch reads PRRYPEAGRATATKSSRHSD.

This sequence belongs to the precorrin methyltransferase family.

It catalyses the reaction precorrin-2 + S-adenosyl-L-methionine = precorrin-3A + S-adenosyl-L-homocysteine + H(+). The catalysed reaction is precorrin-3B + S-adenosyl-L-methionine = precorrin-4 + S-adenosyl-L-homocysteine + 3 H(+). It participates in cofactor biosynthesis; adenosylcobalamin biosynthesis; cob(II)yrinate a,c-diamide from precorrin-2 (aerobic route): step 1/10. Its pathway is cofactor biosynthesis; adenosylcobalamin biosynthesis; cob(II)yrinate a,c-diamide from precorrin-2 (aerobic route): step 3/10. Its function is as follows. Methylates precorrin-2 at the C-20 position to produce precorrin-3A. The polypeptide is Cobalamin biosynthesis protein CobIJ (cobIJ) (Mycobacterium bovis (strain ATCC BAA-935 / AF2122/97)).